Here is a 169-residue protein sequence, read N- to C-terminus: Nascent polypeptide-associated complex subunit alpha (169 aa).

One can recognise an NAC-A/B domain in the interval 14–78; that stretch reads NKNEKKAREM…AKIDNFSQKL (65 aa). Residues 85 to 128 form a disordered region; that stretch reads IQSVSKSPEEIQKDMQLAADQAGDESAKPAAAAEEDDEAPVDAG. The UBA domain occupies 130 to 169; that stretch reads LSAEDIELVASQANVSKNKAIKALKEHNGDIVNAIMALSK.

This sequence belongs to the NAC-alpha family. As to quaternary structure, part of the nascent polypeptide-associated complex (NAC), consisting of EGD2 and EGD1. NAC associates with ribosomes via EGD1.

The protein resides in the cytoplasm. It localises to the nucleus. Component of the nascent polypeptide-associated complex (NAC), a dynamic component of the ribosomal exit tunnel, protecting the emerging polypeptides from interaction with other cytoplasmic proteins to ensure appropriate nascent protein targeting. The NAC complex also promotes mitochondrial protein import by enhancing productive ribosome interactions with the outer mitochondrial membrane and blocks the inappropriate interaction of ribosomes translating non-secretory nascent polypeptides with translocation sites in the membrane of the endoplasmic reticulum. EGD2 may also be involved in transcription regulation. The sequence is that of Nascent polypeptide-associated complex subunit alpha (EGD2) from Vanderwaltozyma polyspora (strain ATCC 22028 / DSM 70294 / BCRC 21397 / CBS 2163 / NBRC 10782 / NRRL Y-8283 / UCD 57-17) (Kluyveromyces polysporus).